We begin with the raw amino-acid sequence, 215 residues long: Cytidylate kinase (215 aa).

10 to 18 (GPAASGKGT) serves as a coordination point for ATP.

This sequence belongs to the cytidylate kinase family. Type 1 subfamily.

Its subcellular location is the cytoplasm. It carries out the reaction CMP + ATP = CDP + ADP. It catalyses the reaction dCMP + ATP = dCDP + ADP. This is Cytidylate kinase from Bartonella henselae (strain ATCC 49882 / DSM 28221 / CCUG 30454 / Houston 1) (Rochalimaea henselae).